A 529-amino-acid chain; its full sequence is Peptide chain release factor 3 (529 aa).

One can recognise a tr-type G domain in the interval 11 to 280; it reads NKRRTFAIIS…GLVKWAPAPM (270 aa). GTP is bound by residues 20 to 27, 88 to 92, and 142 to 145; these read SHPDAGKT, DTPGH, and NKLD.

It belongs to the TRAFAC class translation factor GTPase superfamily. Classic translation factor GTPase family. PrfC subfamily.

It localises to the cytoplasm. Functionally, increases the formation of ribosomal termination complexes and stimulates activities of RF-1 and RF-2. It binds guanine nucleotides and has strong preference for UGA stop codons. It may interact directly with the ribosome. The stimulation of RF-1 and RF-2 is significantly reduced by GTP and GDP, but not by GMP. The sequence is that of Peptide chain release factor 3 from Proteus mirabilis (strain HI4320).